We begin with the raw amino-acid sequence, 344 residues long: Polycomb group RING finger protein 2 (344 aa).

The RING-type zinc-finger motif lies at 18–57 (CALCGGYFIDATTIVECLHSFCKTCIVRYLETNKYCPMCD). Glycyl lysine isopeptide (Lys-Gly) (interchain with G-Cter in SUMO2) cross-links involve residues lysine 51 and lysine 88. The short motif at 81–95 (KLVPGLFKDEMKRRR) is the Nuclear localization signal element. The segment covering 240-253 (TVPTPSEGTNTSGA) has biased composition (polar residues). The interval 240 to 344 (TVPTPSEGTN…VNGAPVPPLT (105 aa)) is disordered. Residues 263 to 313 (APSPATLPATSSSLPSPATPSHGSPSSHGPPATHPTSPTPPSTASGATTAA) are compositionally biased toward low complexity. Positions 314–328 (NGGSLNCLQTPSSTS) are enriched in polar residues. The residue at position 344 (threonine 344) is a Phosphothreonine.

As to quaternary structure, exists as both a monomer and homodimer. Component of a PRC1-like complex. Interacts with CBX8, RING1 and RNF2. Interacts with CBX7. Interacts with PHC2. Post-translationally, phosphorylated. Homodimer formation is regulated by phosphorylation with only unphosphorylated proteins forming homodimers. In terms of tissue distribution, detected in all tissues examined with high expression found in placenta lung and kidney and low expression, in liver, pancreas and skeletal muscle.

Its subcellular location is the nucleus. Functionally, transcriptional repressor. Binds specifically to the DNA sequence 5'-GACTNGACT-3'. Has tumor suppressor activity. May play a role in control of cell proliferation and/or neural cell development. Regulates proliferation of early T progenitor cells by maintaining expression of HES1. Also plays a role in antero-posterior specification of the axial skeleton and negative regulation of the self-renewal activity of hematopoietic stem cells. Component of a Polycomb group (PcG) multiprotein PRC1-like complex, a complex class required to maintain the transcriptionally repressive state of many genes, including Hox genes, throughout development. PcG PRC1 complex acts via chromatin remodeling and modification of histones; it mediates monoubiquitination of histone H2A 'Lys-119', rendering chromatin heritably changed in its expressibility. Within the PRC1-like complex, regulates RNF2 ubiquitin ligase activity. The polypeptide is Polycomb group RING finger protein 2 (PCGF2) (Homo sapiens (Human)).